The sequence spans 488 residues: Inosine-5'-monophosphate dehydrogenase (488 aa).

CBS domains follow at residues Val-93–Val-149 and Met-153–Glu-214. NAD(+) is bound by residues Asp-248 and Asp-248–Ser-250. Residue Lys-267 is modified to N6-acetyllysine. Gly-298–Gly-300 is an NAD(+) binding site. K(+) is bound by residues Gly-300 and Gly-302. Ser-303 serves as a coordination point for IMP. A K(+)-binding site is contributed by Cys-305. The Thioimidate intermediate role is filled by Cys-305. Residues Asp-338–Gly-340, Gly-361–Ser-362, and Tyr-385–Gly-389 each bind IMP. The active-site Proton acceptor is the Arg-401. Residue Glu-415 participates in IMP binding. Residue Lys-428 is modified to N6-acetyllysine. Glu-469, Ser-470, and His-471 together coordinate K(+).

Belongs to the IMPDH/GMPR family. As to quaternary structure, homotetramer. K(+) is required as a cofactor.

It carries out the reaction IMP + NAD(+) + H2O = XMP + NADH + H(+). Its pathway is purine metabolism; XMP biosynthesis via de novo pathway; XMP from IMP: step 1/1. Mycophenolic acid (MPA) is a non-competitive inhibitor that prevents formation of the closed enzyme conformation by binding to the same site as the amobile flap. In contrast, mizoribine monophosphate (MZP) is a competitive inhibitor that induces the closed conformation. MPA is a potent inhibitor of mammalian IMPDHs but a poor inhibitor of the bacterial enzymes. MZP is a more potent inhibitor of bacterial IMPDH. Catalyzes the conversion of inosine 5'-phosphate (IMP) to xanthosine 5'-phosphate (XMP), the first committed and rate-limiting step in the de novo synthesis of guanine nucleotides, and therefore plays an important role in the regulation of cell growth. The sequence is that of Inosine-5'-monophosphate dehydrogenase from Escherichia coli O157:H7.